We begin with the raw amino-acid sequence, 888 residues long: uncharacterized protein (888 aa).

The signal sequence occupies residues 1-20; the sequence is MKILKSLVLLVLFIVMPAKA. 6 helical membrane passes run 513-533, 565-585, 611-631, 649-669, 682-702, and 781-801; these read IVKA…VAGA, TYFF…VVGA, LLFI…IITI, VIAF…IILM, ISTL…FLLI, and LLFY…NIVV.

Belongs to the TrbL/VirB6 family.

The protein localises to the cell membrane. This is an uncharacterized protein from Rickettsia prowazekii (strain Madrid E).